A 597-amino-acid polypeptide reads, in one-letter code: Protein unc-93 homolog B1 (597 aa).

Positions 1 to 29 (MEAEPPLYPMAGAAGPQGDEDLLGVPDGP) are disordered. Transmembrane regions (helical) follow at residues 64–84 (VLAA…LLQM), 110–130 (KMLM…PVLI), 132–152 (FFGT…FVST), 160–180 (TLVP…ASMG), and 223–243 (IFYS…IYFL). N-linked (GlcNAc...) asparagine glycans are attached at residues Asn251 and Asn272. The next 5 helical transmembrane spans lie at 285 to 305 (LIVV…LVLG), 343 to 363 (LVPF…GIAL), 378 to 398 (LLVA…LGLW), 403 to 423 (VPLV…FFWA), and 428 to 448 (VLQH…GSAL). N-linked (GlcNAc...) asparagine glycosylation is present at Asn449. 2 consecutive transmembrane segments (helical) span residues 469–489 (FIFT…YLGS) and 491–511 (LHMK…AVSY). The disordered stretch occupies residues 522–597 (VAPRQPRIPR…AQGGDGPEEQ (76 aa)). Phosphoserine is present on residues Ser547 and Ser550.

This sequence belongs to the unc-93 family. In terms of assembly, interacts with TLR3, TLR5, TLR7, and TLR9 (probably via transmembrane domain). Post-translationally, N-glycosylated. In terms of tissue distribution, expressed in plasmocytoid dendritic cells (at protein level). Highly expressed in antigen-presenting cells. Expressed in heart, and at lower level in kidney. Expressed at low level in other tissues.

The protein localises to the endoplasmic reticulum membrane. The protein resides in the endosome. It is found in the lysosome. Its subcellular location is the cytoplasmic vesicle. It localises to the phagosome. In terms of biological role, plays an important role in innate and adaptive immunity by regulating nucleotide-sensing Toll-like receptor (TLR) signaling. Required for the transport of a subset of TLRs (including TLR3, TLR7 and TLR9) from the endoplasmic reticulum to endolysosomes where they can engage pathogen nucleotides and activate signaling cascades. May play a role in autoreactive B-cells removal. This chain is Protein unc-93 homolog B1, found in Homo sapiens (Human).